Consider the following 441-residue polypeptide: S-adenosylmethionine synthase 1 (441 aa).

E9 is a Mg(2+) binding site. H15 contacts ATP. A K(+)-binding site is contributed by E43. Positions 56 and 99 each coordinate L-methionine. Residues 167-169, 235-238, D246, 252-253, A269, K273, and K277 contribute to the ATP site; these read DGK, SGRF, and RK. D246 contributes to the L-methionine binding site. L-methionine is bound at residue K277.

The protein belongs to the AdoMet synthase family. Homotetramer. Mn(2+) serves as cofactor. Requires Mg(2+) as cofactor. The cofactor is Co(2+). It depends on K(+) as a cofactor.

The protein resides in the cytoplasm. It catalyses the reaction L-methionine + ATP + H2O = S-adenosyl-L-methionine + phosphate + diphosphate. The protein operates within amino-acid biosynthesis; S-adenosyl-L-methionine biosynthesis; S-adenosyl-L-methionine from L-methionine: step 1/1. In terms of biological role, catalyzes the formation of S-adenosylmethionine from methionine and ATP. The reaction comprises two steps that are both catalyzed by the same enzyme: formation of S-adenosylmethionine (AdoMet) and triphosphate, and subsequent hydrolysis of the triphosphate. The protein is S-adenosylmethionine synthase 1 (SAMS1) of Daucus carota (Wild carrot).